Consider the following 1070-residue polypeptide: DNA-directed RNA polymerase subunit beta (1070 aa).

It belongs to the RNA polymerase beta chain family. As to quaternary structure, in plastids the minimal PEP RNA polymerase catalytic core is composed of four subunits: alpha, beta, beta', and beta''. When a (nuclear-encoded) sigma factor is associated with the core the holoenzyme is formed, which can initiate transcription.

The protein resides in the plastid. The protein localises to the chloroplast. The enzyme catalyses RNA(n) + a ribonucleoside 5'-triphosphate = RNA(n+1) + diphosphate. DNA-dependent RNA polymerase catalyzes the transcription of DNA into RNA using the four ribonucleoside triphosphates as substrates. In Spinacia oleracea (Spinach), this protein is DNA-directed RNA polymerase subunit beta.